The following is a 414-amino-acid chain: COUP transcription factor 2 (414 aa).

The segment at 1-72 is disordered; the sequence is MAMVVSTWRD…PGGPGSDKQQ (72 aa). Over residues 27 to 37 the composition is skewed to pro residues; it reads PPVPGPPPGAP. Residues 38–57 are compositionally biased toward low complexity; it reads HTPQTPGQGGPASTPAQTAA. A Phosphothreonine modification is found at Thr51. Gly residues predominate over residues 58 to 67; that stretch reads GGQGGPGGPG. Positions 76–151 form a DNA-binding region, nuclear receptor; that stretch reads HIECVVCGDK…VGMRREAVQR (76 aa). 2 consecutive NR C4-type zinc fingers follow at residues 79–99 and 115–139; these read CVVC…CEGC and CRAN…LKKC. Residues 117 to 414 are interaction with ZFPM2; that stretch reads ANRNCPIDQH…SFNWPYMAIQ (298 aa). Residues 177 to 403 form the NR LBD domain; sequence YLSGYISLLL…TLIRDMLLSG (227 aa). The tract at residues 337–414 is important for dimerization; that stretch reads LQEKSQCALE…SFNWPYMAIQ (78 aa).

It belongs to the nuclear hormone receptor family. NR2 subfamily. In terms of assembly, interacts with SQSTM1. Binds DNA as a dimer; homodimer or heterodimer with NR2F6. Interacts with NCOA1, NCOA2, NCOA3 and PPARGC1A. Interacts with ZFPM2. In terms of tissue distribution, ubiquitous. Expressed in the stromal cells of developing fetal ovaries.

Its subcellular location is the nucleus. In terms of biological role, ligand-activated transcription factor. Activated by high concentrations of 9-cis-retinoic acid and all-trans-retinoic acid, but not by dexamethasone, cortisol or progesterone (in vitro). Regulation of the apolipoprotein A-I gene transcription. Binds to DNA site A. May be required to establish ovary identity during early gonad development. The protein is COUP transcription factor 2 (NR2F2) of Homo sapiens (Human).